The primary structure comprises 763 residues: 1,4-alpha-glucan branching enzyme GlgB (763 aa).

D437 acts as the Nucleophile in catalysis. E488 acts as the Proton donor in catalysis.

Belongs to the glycosyl hydrolase 13 family. GlgB subfamily. As to quaternary structure, monomer.

It carries out the reaction Transfers a segment of a (1-&gt;4)-alpha-D-glucan chain to a primary hydroxy group in a similar glucan chain.. It participates in glycan biosynthesis; glycogen biosynthesis. Catalyzes the formation of the alpha-1,6-glucosidic linkages in glycogen by scission of a 1,4-alpha-linked oligosaccharide from growing alpha-1,4-glucan chains and the subsequent attachment of the oligosaccharide to the alpha-1,6 position. This Synechococcus sp. (strain JA-2-3B'a(2-13)) (Cyanobacteria bacterium Yellowstone B-Prime) protein is 1,4-alpha-glucan branching enzyme GlgB.